Here is a 108-residue protein sequence, read N- to C-terminus: uncharacterized protein (108 aa).

A run of 3 helical transmembrane segments spans residues 26-46 (GAVY…ALII), 54-74 (LMTL…PLIF), and 84-104 (INYQ…CIYM).

The protein localises to the cell membrane. This is an uncharacterized protein from Methanocaldococcus jannaschii (strain ATCC 43067 / DSM 2661 / JAL-1 / JCM 10045 / NBRC 100440) (Methanococcus jannaschii).